Here is a 190-residue protein sequence, read N- to C-terminus: NADH-quinone oxidoreductase subunit B (190 aa).

[4Fe-4S] cluster is bound by residues cysteine 39, cysteine 40, cysteine 104, and cysteine 135.

Belongs to the complex I 20 kDa subunit family. In terms of assembly, NDH-1 is composed of 14 different subunits. Subunits NuoB, C, D, E, F, and G constitute the peripheral sector of the complex. Requires [4Fe-4S] cluster as cofactor.

It is found in the cell inner membrane. It catalyses the reaction a quinone + NADH + 5 H(+)(in) = a quinol + NAD(+) + 4 H(+)(out). NDH-1 shuttles electrons from NADH, via FMN and iron-sulfur (Fe-S) centers, to quinones in the respiratory chain. The immediate electron acceptor for the enzyme in this species is believed to be a menaquinone. Couples the redox reaction to proton translocation (for every two electrons transferred, four hydrogen ions are translocated across the cytoplasmic membrane), and thus conserves the redox energy in a proton gradient. The polypeptide is NADH-quinone oxidoreductase subunit B (Chlorobium phaeobacteroides (strain BS1)).